The primary structure comprises 202 residues: MAVQRKYRASRRLGVSLWGRSKDPFNTRNYPPGQHGNMGYKKPSDFGKQFAAHKKFKFYYAISSKQMRNVFLKAYKKRGDTGDNFVGLLESRLSSILYNSGLVPTIFSARQLISHKHVLVNGKTVNISSYIVKVGDVVTLKEKAKNLPAVIAAIQSQEHKVPDYLEVDTQEKSVRYLRVPKYCEVPYPATMEVNLVIEFYSR.

Residues 91 to 168 form the S4 RNA-binding domain; it reads SRLSSILYNS…HKVPDYLEVD (78 aa).

This sequence belongs to the universal ribosomal protein uS4 family. Part of the 30S ribosomal subunit. Contacts protein S5. The interaction surface between S4 and S5 is involved in control of translational fidelity.

One of the primary rRNA binding proteins, it binds directly to 16S rRNA where it nucleates assembly of the body of the 30S subunit. Functionally, with S5 and S12 plays an important role in translational accuracy. The chain is Small ribosomal subunit protein uS4 from Ehrlichia canis (strain Jake).